Here is a 326-residue protein sequence, read N- to C-terminus: Beta-ketoacyl-[acyl-carrier-protein] synthase III 2 (326 aa).

Residues cysteine 114 and histidine 251 contribute to the active site. The ACP-binding stretch occupies residues 252-256; that stretch reads SANAR. Asparagine 281 is a catalytic residue.

The protein belongs to the thiolase-like superfamily. FabH family. Homodimer.

The protein localises to the cytoplasm. It catalyses the reaction malonyl-[ACP] + acetyl-CoA + H(+) = 3-oxobutanoyl-[ACP] + CO2 + CoA. Its pathway is lipid metabolism; fatty acid biosynthesis. Its function is as follows. Catalyzes the condensation reaction of fatty acid synthesis by the addition to an acyl acceptor of two carbons from malonyl-ACP. Catalyzes the first condensation reaction which initiates fatty acid synthesis and may therefore play a role in governing the total rate of fatty acid production. Possesses both acetoacetyl-ACP synthase and acetyl transacylase activities. Its substrate specificity determines the biosynthesis of branched-chain and/or straight-chain of fatty acids. This is Beta-ketoacyl-[acyl-carrier-protein] synthase III 2 from Staphylococcus epidermidis (strain ATCC 12228 / FDA PCI 1200).